Here is a 411-residue protein sequence, read N- to C-terminus: MNFDNLALTDKEIFNIIQLENNRQNNTIELIASENFASKSVMEAMGSQLTNKYAEGYPSKRYYGGCEEVDKIESLAIERLKKIFGCEHANVQPHSGSQANMAVYLSVLEPGDTIMGMNLSHGGHLTHGSPVNFSGRLFNFVAYGVNKETELINYDEVRSLALQHKPKMIVAGASAYSRVIDFKRLKQICDEVGAYFMVDMAHIAGLIAAGYHPSPVPYADFVTTTTHKTLRGPRGGAILCKEKYAKQVDKAIFPGIQGGPLMHVIAAKAVCFGEALKDDYKNYIEQVVKNAKVLEEELKKYDFKLVSGGTDNHLLLIDLTNKDITGKDAEKLLDSIGITVNKNTIPFETKSPFVTSGIRIGTPAVTTRGFKEEEMKEIAYLINYVIENRDSDLSEAKNKVKEICSRHILYK.

(6S)-5,6,7,8-tetrahydrofolate-binding positions include L119 and 123–125 (GHL). K228 bears the N6-(pyridoxal phosphate)lysine mark. 351–353 (SPF) contributes to the (6S)-5,6,7,8-tetrahydrofolate binding site.

It belongs to the SHMT family. Homodimer. Pyridoxal 5'-phosphate serves as cofactor.

It is found in the cytoplasm. The catalysed reaction is (6R)-5,10-methylene-5,6,7,8-tetrahydrofolate + glycine + H2O = (6S)-5,6,7,8-tetrahydrofolate + L-serine. The protein operates within one-carbon metabolism; tetrahydrofolate interconversion. Its pathway is amino-acid biosynthesis; glycine biosynthesis; glycine from L-serine: step 1/1. Its function is as follows. Catalyzes the reversible interconversion of serine and glycine with tetrahydrofolate (THF) serving as the one-carbon carrier. This reaction serves as the major source of one-carbon groups required for the biosynthesis of purines, thymidylate, methionine, and other important biomolecules. Also exhibits THF-independent aldolase activity toward beta-hydroxyamino acids, producing glycine and aldehydes, via a retro-aldol mechanism. The polypeptide is Serine hydroxymethyltransferase (Clostridium novyi (strain NT)).